The primary structure comprises 465 residues: MIVFVRFNSSYGFPVEVDSDTSIFQLKEVVAKRQGVPADQLRVIFAGKELQNHLTVQNCDLEQQSIVHIVQRPQRKSHETNASGGDKPQSTPEGSIWEPRSLTRVDLSSHILPADSVGLAVILDTDSKSDSEAARGPEAKPTYHSFFVYCKGPCHKVQPGKLRVQCGTCRQATLTLAQGPSCWDDVLIPNRMSGECQSPDCPGTRAEFFFKCGAHPTSDKDTSVALNLITNNSRSIPCIACTDVRNPVLVFQCNHRHVICLDCFHLYCVTRLNDRQFVHDAQLGYSLPCVAGCPNSLIKELHHFRILGEEQYNRYQQYGAEECVLQMGGVLCPRPGCGAGLLPEQGQKKVTCEGGNGLGCGFVFCRDCKEAYHEGECDSMFEASGATSQAYRVDQRAAEQARWEEASKETIKKTTKPCPRCNVPIEKNGGCMHMKCPQPQCKLEWCWNCGCEWNRACMGDHWFDV.

In terms of domain architecture, Ubiquitin-like spans 1-76 (MIVFVRFNSS…VHIVQRPQRK (76 aa)). Ser-65 carries the phosphoserine; by PINK1 modification. Residues 71–96 (QRPQRKSHETNASGGDKPQSTPEGSI) form a disordered region. The necessary for PINK1-dependent localization to mitochondria stretch occupies residues 77-237 (SHETNASGGD…LITNNSRSIP (161 aa)). Position 80 is a phosphothreonine (Thr-80). Positions 80 to 93 (TNASGGDKPQSTPE) are enriched in polar residues. Residues 141-225 (PTYHSFFVYC…PTSDKDTSVA (85 aa)) form an RING-type 0; atypical zinc finger. Thr-175 carries the phosphothreonine; by PINK1 modification. The interval 204–238 (TRAEFFFKCGAHPTSDKDTSVALNLITNNSRSIPC) is SYT11 binding 1. Thr-217 is subject to Phosphothreonine. Residues 234–465 (RSIPCIACTD…ACMGDHWFDV (232 aa)) are TRIAD supradomain. The Zn(2+) site is built by Cys-238, Cys-241, Cys-253, His-257, Cys-260, Cys-263, Cys-289, Cys-293, Cys-332, and Cys-337. The RING-type 1 zinc-finger motif lies at 238–293 (CIACTDVRNPVLVFQCNHRHVICLDCFHLYCVTRLNDRQFVHDAQLGYSLPCVAGC). An SYT11 binding 2 region spans residues 257 to 293 (HVICLDCFHLYCVTRLNDRQFVHDAQLGYSLPCVAGC). The IBR-type zinc finger occupies 313-377 (NRYQQYGAEE…CKEAYHEGEC (65 aa)). A Glycyl lysine isopeptide (Lys-Gly) (interchain with G-Cter in ISG15) cross-link involves residue Lys-349. Zn(2+)-binding residues include Cys-352, Cys-360, Cys-365, and Cys-368. Lys-369 is covalently cross-linked (Glycyl lysine isopeptide (Lys-Gly) (interchain with G-Cter in ISG15)). Zn(2+) contacts are provided by His-373 and Cys-377. Residues 378-410 (DSMFEASGATSQAYRVDQRAAEQARWEEASKET) are REP. Zn(2+) is bound by residues Cys-418 and Cys-421. The RING-type 2; atypical zinc-finger motif lies at 418–449 (CPRCNVPIEKNGGCMHMKCPQPQCKLEWCWNC). The active site involves Cys-431. 6 residues coordinate Zn(2+): Cys-436, Cys-441, Cys-446, Cys-449, Cys-457, and His-461.

This sequence belongs to the RBR family. Parkin subfamily. Forms an E3 ubiquitin ligase complex with UBE2L3 or UBE2L6. Mediates 'Lys-63'-linked polyubiquitination by associating with UBE2V1. Part of a SCF-like complex, consisting of PRKN, CUL1 and FBXW7. Interacts with SNCAIP. Binds to the C2A and C2B domains of SYT11. Interacts and regulates the turnover of SEPTIN5. Part of a complex, including STUB1, HSP70 and GPR37. The amount of STUB1 in the complex increases during ER stress. STUB1 promotes the dissociation of HSP70 from PRKN and GPR37, thus facilitating PRKN-mediated GPR37 ubiquitination. HSP70 transiently associates with unfolded GPR37 and inhibits the E3 activity of PRKN, whereas, STUB1 enhances the E3 activity of PRKN through promotion of dissociation of HSP70 from PRKN-GPR37 complexes. Interacts with PSMD4 and PACRG. Interacts with LRRK2. Interacts with RANBP2. Interacts with SUMO1 but not SUMO2, which promotes nuclear localization and autoubiquitination. Interacts (via first RING-type domain) with AIMP2 (via N-terminus). Interacts with PSMA7 and RNF41. Interacts with PINK1. Forms a complex with PINK1 and PARK7. Interacts with CHPF, the interaction with isoform 2 may facilitate PRKN transport into the mitochondria. Interacts with MFN2 (phosphorylated), promotes PRKN localization in dysfunctional depolarized mitochondria. Interacts with FBXO7; this promotes translocation to dysfunctional depolarized mitochondria. Interacts with ZNF746. Interacts with heat shock protein 70 family members, including HSPA1L, HSPA1A and HSPA8; interaction HSPA1L promotes translocation to damaged mitochondria. Interacts with BAG4 and, to a lesser extent, BAG5; interaction with BAG4 inhibits translocation to damaged mitochondria. Forms a complex with PRKN and PARK7. Interacts with AMBRA1. In terms of processing, auto-ubiquitinates in an E2-dependent manner leading to its own degradation. Also polyubiquitinated by RNF41 for proteasomal degradation. S-nitrosylated. Post-translationally, phosphorylated. Activation requires phosphorylation at Ser-65 by PINK1 and binding to PINK1 phosphorylated ubiquitin. Phosphorylation at Thr-175 by PINK1 and at Thr-217 is important for mitochondrial localization. Largely confined to neuronal elements, including fibers and neuropil. Highly expressed at the forebrain level, in pyramidal cells of layer V, in various cortical regions and cerebellum. Expressed in the nucleus of diagonal band of Broca, nucleus basalis, bed nucleus of the stria terminalis, and olfactory tubercle. Moderate expression is seen in most neurons of the subthalamic nucleus, heart, skeletal muscle and testis. Moderate expression was found in frontal cortex, parietal cortex, cerebellum, heart, skeletal muscle and testis.

The protein localises to the cytoplasm. The protein resides in the cytosol. Its subcellular location is the nucleus. It is found in the endoplasmic reticulum. It localises to the mitochondrion. The protein localises to the mitochondrion outer membrane. The protein resides in the cell projection. Its subcellular location is the neuron projection. It is found in the postsynaptic density. It localises to the presynapse. The catalysed reaction is [E2 ubiquitin-conjugating enzyme]-S-ubiquitinyl-L-cysteine + [acceptor protein]-L-lysine = [E2 ubiquitin-conjugating enzyme]-L-cysteine + [acceptor protein]-N(6)-ubiquitinyl-L-lysine.. The protein operates within protein modification; protein ubiquitination. Its activity is regulated as follows. In the autoinhibited state the side chain of Phe-463 inserts into a hydrophobic groove in RING-0, occluding the ubiquitin acceptor site Cys-431, whereas the REP repressor element binds RING-1 and blocks its E2-binding site. Activation of PRKN requires 2 steps: (1) phosphorylation at Ser-65 by PINK1 and (2) binding to phosphorylated ubiquitin, leading to unlock repression of the catalytic Cys-431 by the RING-0 region via an allosteric mechanism and converting PRKN to its fully-active form. According to another report, phosphorylation at Ser-65 by PINK1 is not essential for activation and only binding to phosphorylated ubiquitin is essential to unlock repression. In addition, ISG15 conjugation positively regulates its ubiquitin E3 ligase activity by suppressing the intramolecular interaction that maintains its autoinhibited conformation. Its function is as follows. Functions within a multiprotein E3 ubiquitin ligase complex, catalyzing the covalent attachment of ubiquitin moieties onto substrate proteins. Substrates include SYT11 and VDAC1. Other substrates are BCL2, CCNE1, GPR37, RHOT1/MIRO1, MFN1, MFN2, STUB1, SNCAIP, SEPTIN5, TOMM20, USP30, ZNF746, MIRO1 and AIMP2. Mediates monoubiquitination as well as 'Lys-6', 'Lys-11', 'Lys-48'-linked and 'Lys-63'-linked polyubiquitination of substrates depending on the context. Participates in the removal and/or detoxification of abnormally folded or damaged protein by mediating 'Lys-63'-linked polyubiquitination of misfolded proteins such as PARK7: 'Lys-63'-linked polyubiquitinated misfolded proteins are then recognized by HDAC6, leading to their recruitment to aggresomes, followed by degradation. Mediates 'Lys-63'-linked polyubiquitination of a 22 kDa O-linked glycosylated isoform of SNCAIP, possibly playing a role in Lewy-body formation. Mediates monoubiquitination of BCL2, thereby acting as a positive regulator of autophagy. Protects against mitochondrial dysfunction during cellular stress, by acting downstream of PINK1 to coordinate mitochondrial quality control mechanisms that remove and replace dysfunctional mitochondrial components. Depending on the severity of mitochondrial damage and/or dysfunction, activity ranges from preventing apoptosis and stimulating mitochondrial biogenesis to regulating mitochondrial dynamics and eliminating severely damaged mitochondria via mitophagy. Activation and recruitment onto the outer membrane of damaged/dysfunctional mitochondria (OMM) requires PINK1-mediated phosphorylation of both PRKN and ubiquitin. After mitochondrial damage, functions with PINK1 to mediate the decision between mitophagy or preventing apoptosis by inducing either the poly- or monoubiquitination of VDAC1, respectively; polyubiquitination of VDAC1 promotes mitophagy, while monoubiquitination of VDAC1 decreases mitochondrial calcium influx which ultimately inhibits apoptosis. When cellular stress results in irreversible mitochondrial damage, promotes the autophagic degradation of dysfunctional depolarized mitochondria (mitophagy) by promoting the ubiquitination of mitochondrial proteins such as TOMM20, RHOT1/MIRO1, MFN1 and USP30. Preferentially assembles 'Lys-6'-, 'Lys-11'- and 'Lys-63'-linked polyubiquitin chains, leading to mitophagy. The PINK1-PRKN pathway also promotes fission of damaged mitochondria by PINK1-mediated phosphorylation which promotes the PRKN-dependent degradation of mitochondrial proteins involved in fission such as MFN2. This prevents the refusion of unhealthy mitochondria with the mitochondrial network or initiates mitochondrial fragmentation facilitating their later engulfment by autophagosomes. Regulates motility of damaged mitochondria via the ubiquitination and subsequent degradation of MIRO1 and MIRO2; in motor neurons, this likely inhibits mitochondrial intracellular anterograde transport along the axons which probably increases the chance of the mitochondria undergoing mitophagy in the soma. Involved in mitochondrial biogenesis via the 'Lys-48'-linked polyubiquitination of transcriptional repressor ZNF746/PARIS which leads to its subsequent proteasomal degradation and allows activation of the transcription factor PPARGC1A. Limits the production of reactive oxygen species (ROS). Regulates cyclin-E during neuronal apoptosis. In collaboration with CHPF isoform 2, may enhance cell viability and protect cells from oxidative stress. Independently of its ubiquitin ligase activity, protects from apoptosis by the transcriptional repression of p53/TP53. May protect neurons against alpha synuclein toxicity, proteasomal dysfunction, GPR37 accumulation, and kainate-induced excitotoxicity. May play a role in controlling neurotransmitter trafficking at the presynaptic terminal and in calcium-dependent exocytosis. May represent a tumor suppressor gene. In Rattus norvegicus (Rat), this protein is E3 ubiquitin-protein ligase parkin.